The sequence spans 1213 residues: MIELNNHSKINKNENNTNTRNNSSNNNNNNNNINKTNTNKYFEYNQNSIIYSSIPNSFLSHHPNSVGSQCLSLNSFLPPKPPILLSIFNSDTIGNNNNNNYSSSSSRNNSSGCSSSNNNNNNNNNNNNNNNNNNNNNNNNCNIEQYKNNQKQPKQQQQQKDQTIATQHRISLSSSSSSSSLSSSSSSSSVKQSFQIVKRLFGSLSEYMFPQKDEILYETDPYYLYQDDTQSNDSNEFYDDTDIGSDIDEANLNNTYNIQNCNKTLYNKQQQQAHFVNMNKNVNSNNGTGNSNQSNNVNKNQQNNNNNNNNNSHNNNNGNQNSSSSSSNSGASGSGGNGNNNNNNNNNNNNNNNNNNNSNSNSNNNSKSNNNNKKEGKDGATMNGSHPLIPFRKKPAQVPSPCFRMNSPNSDNDQYLDQLALENSSKKSLVVYNTDNLDQWKHSHLNENFDILQNDLIDIQQQQQQQQQQDNTLQYSSPINKRQEQEQQHIPFQFTTEQQQQLQQQQQQQQQNKTKQHPILLQRQQQQKQKQQQQQQIQQEQIGNNNSNNNNNINNNNNINNNYNNVNDLMNKFEIDQKQHDSQQNLVEEKRTPSFHEHNIIFNSFNFICSIVLDGSNIKSTEKYKAKLIIGFCFTILSFIPSWIIFFWLSGINKPAVMAIIAMPMSISSLVILKRTGSIHYPCHILCFTLCFALTINSYYTGGHQSTIRLLMSTVPIISALVLGRKASIQWSLMVLSIYLLFFVANLYGHEYVQGIPSIIIRSHMNFIIDVTIIIMTLIFTLCYQYFIDEAHRETKLKNAQLTIAKDAAIEAYQARQEFLATMSHEIRTPLNGLIGMATLLRDSHNLPPEEKTMAKAVKSCGDILLRLVNDILDLSKLEANQMGLEHIPFRMRELTQQICHVLSGQANEKNIHLSCEVSDKIPSILLGDSGRILQILMNLTGNALKFTQSGYVKIIIDLIEEESELVSLKKGEYNISFRVKDTGIGVPVESHQKIFEAFVQADPSDSRKYGGSGLGLYLCAKLVRLMKGEIGVYNNPDCDGSTFWFILPLEEGTDQSMQQMNNGARHKAFPQDCVKVLIAEDNIINQRVAVKFLEKIGIKAEVAGNGNEVLEILERQHYDLIFMDFQMPILDGLRCSKTIREFEQNHKWNRICPSIFICGLTANTMSTDKKRCFDHGMNHFISKPFQLEQLRSAIEMAIEHKQRNLMNLNIRN.

Disordered regions lie at residues 1–37 (MIEL…NKTN), 98–189 (NNNY…SSSS), 279–392 (NKNV…IPFR), and 495–565 (TTEQ…NYNN). Composition is skewed to low complexity over residues 98-162 (NNNY…QKDQ), 171-189 (SLSS…SSSS), 279-331 (NKNV…NSGA), 339-371 (NNNN…SNNN), 498-511 (QQQQ…QQQQ), and 522-565 (QRQQ…NYNN). 6 consecutive transmembrane segments (helical) span residues 600-618 (IIFN…GSNI), 628-648 (LIIG…IFFW), 652-672 (INKP…SLVI), 676-696 (TGSI…ALTI), 729-749 (IQWS…NLYG), and 768-788 (IIDV…QYFI). The 231-residue stretch at 822 to 1052 (TMSHEIRTPL…TFWFILPLEE (231 aa)) folds into the Histidine kinase domain. Phosphohistidine; by autocatalysis is present on histidine 825. A Response regulatory domain is found at 1076-1199 (KVLIAEDNII…QLRSAIEMAI (124 aa)). 4-aspartylphosphate is present on aspartate 1125.

Activation probably requires transfer of a phosphate group between a histidine in the kinase core (transmitter) domain and an aspartate of the receiver domain.

It is found in the nucleus membrane. The catalysed reaction is ATP + protein L-histidine = ADP + protein N-phospho-L-histidine.. Functionally, involved in a signal transduction pathway that regulates morphogenesis and controls entry into the culmination stage. May act via the regA pathway, being activated by a morphogenesis-stimulated ligand, reducing phosphodiesterase regA levels and allowing cAMP level to rise to promote the culmination stage. This protein probably undergoes an ATP-dependent autophosphorylation at a conserved histidine residue in the kinase core, and a phosphoryl group is then transferred to a conserved aspartate residue in the receiver domain. In Dictyostelium discoideum (Social amoeba), this protein is Hybrid signal transduction histidine kinase K (dhkK).